A 542-amino-acid chain; its full sequence is Protein lin-9 homolog (542 aa).

Ala2 is modified (N-acetylalanine). The segment at 2 to 296 (AELDQLPDES…QKQRPSRFFM (295 aa)) is sufficient for interaction with RB1. Lys21 is covalently cross-linked (Glycyl lysine isopeptide (Lys-Gly) (interchain with G-Cter in SUMO2)). Residues Ser65 and Ser95 each carry the phosphoserine modification. Thr96 and Thr304 each carry phosphothreonine. Ser309 and Ser321 each carry phosphoserine. The stretch at 354–413 (MIKKEHIKKLREMNTEAEKLKSYSMPISIEFQRRYATIVLELEQLNKDLNKVLHKVQQYC) forms a coiled coil.

The protein belongs to the lin-9 family. Component of the DREAM complex (also named LINC complex) at least composed of E2F4, E2F5, LIN9, LIN37, LIN52, LIN54, MYBL1, MYBL2, RBL1, RBL2, RBBP4, TFDP1 and TFDP2. The complex exists in quiescent cells where it represses cell cycle-dependent genes. It dissociates in S phase when LIN9, LIN37, LIN52 and LIN54 form a subcomplex that binds to MYBL2. Interacts with RB1. Expressed in thymus and testis.

The protein resides in the nucleus. Its subcellular location is the nucleoplasm. Acts as a tumor suppressor. Inhibits DNA synthesis. Its ability to inhibit oncogenic transformation is mediated through its association with RB1. Plays a role in the expression of genes required for the G1/S transition. The sequence is that of Protein lin-9 homolog (LIN9) from Homo sapiens (Human).